Here is a 545-residue protein sequence, read N- to C-terminus: Hyaluronidase PH-20 (545 aa).

The signal sequence occupies residues 1-35 (MGVLKFKHIFFGSAVELSGVFQIVFIFLLIPCCLT). Cystine bridges form between Cys-60–Cys-355 and Cys-224–Cys-239. Asn-82 carries N-linked (GlcNAc...) asparagine glycosylation. Residue Glu-148 is the Proton donor of the active site. N-linked (GlcNAc...) asparagine glycosylation is present at Asn-180. The N-linked (GlcNAc...) asparagine glycan is linked to Asn-372. Cystine bridges form between Cys-380–Cys-391, Cys-385–Cys-439, and Cys-441–Cys-468.

The protein belongs to the glycosyl hydrolase 56 family. As to expression, testis.

Its subcellular location is the cell membrane. It catalyses the reaction Random hydrolysis of (1-&gt;4)-linkages between N-acetyl-beta-D-glucosamine and D-glucuronate residues in hyaluronate.. Its function is as follows. Involved in sperm-egg adhesion. Upon fertilization sperm must first penetrate a layer of cumulus cells that surrounds the egg before reaching the zona pellucida. The cumulus cells are embedded in a matrix containing hyaluronic acid which is formed prior to ovulation. This protein aids in penetrating the layer of cumulus cells by digesting hyaluronic acid. The chain is Hyaluronidase PH-20 (SPAM1) from Oryctolagus cuniculus (Rabbit).